The sequence spans 342 residues: Holliday junction branch migration complex subunit RuvB (342 aa).

The tract at residues 1–21 is disordered; sequence MSVEHSPVDPSAEPPEKAEEA. Residues 1 to 184 form a large ATPase domain (RuvB-L) region; sequence MSVEHSPVDP…FGFTAQLDYY (184 aa). Residues Leu23, Arg24, Gly65, Lys68, Thr69, Thr70, 131-133, Arg174, Tyr184, and Arg221 contribute to the ATP site; that span reads EDF. Thr69 contacts Mg(2+). A small ATPAse domain (RuvB-S) region spans residues 185–255; the sequence is EVADLERIVT…GAETALDLYE (71 aa). The tract at residues 258–342 is head domain (RuvB-H); the sequence is PLGLDRLDRA…PPDSSGEGLF (85 aa). DNA-binding residues include Arg313 and Arg318.

The protein belongs to the RuvB family. Homohexamer. Forms an RuvA(8)-RuvB(12)-Holliday junction (HJ) complex. HJ DNA is sandwiched between 2 RuvA tetramers; dsDNA enters through RuvA and exits via RuvB. An RuvB hexamer assembles on each DNA strand where it exits the tetramer. Each RuvB hexamer is contacted by two RuvA subunits (via domain III) on 2 adjacent RuvB subunits; this complex drives branch migration. In the full resolvosome a probable DNA-RuvA(4)-RuvB(12)-RuvC(2) complex forms which resolves the HJ.

Its subcellular location is the cytoplasm. The catalysed reaction is ATP + H2O = ADP + phosphate + H(+). The RuvA-RuvB-RuvC complex processes Holliday junction (HJ) DNA during genetic recombination and DNA repair, while the RuvA-RuvB complex plays an important role in the rescue of blocked DNA replication forks via replication fork reversal (RFR). RuvA specifically binds to HJ cruciform DNA, conferring on it an open structure. The RuvB hexamer acts as an ATP-dependent pump, pulling dsDNA into and through the RuvAB complex. RuvB forms 2 homohexamers on either side of HJ DNA bound by 1 or 2 RuvA tetramers; 4 subunits per hexamer contact DNA at a time. Coordinated motions by a converter formed by DNA-disengaged RuvB subunits stimulates ATP hydrolysis and nucleotide exchange. Immobilization of the converter enables RuvB to convert the ATP-contained energy into a lever motion, pulling 2 nucleotides of DNA out of the RuvA tetramer per ATP hydrolyzed, thus driving DNA branch migration. The RuvB motors rotate together with the DNA substrate, which together with the progressing nucleotide cycle form the mechanistic basis for DNA recombination by continuous HJ branch migration. Branch migration allows RuvC to scan DNA until it finds its consensus sequence, where it cleaves and resolves cruciform DNA. The polypeptide is Holliday junction branch migration complex subunit RuvB (Cutibacterium acnes (strain DSM 16379 / KPA171202) (Propionibacterium acnes)).